The following is a 207-amino-acid chain: MLFAQLNEYMAEVGLDASEQQKKQLVDFVGMLNKWNKAFNLTSVRDPEQMLIRHIMDSLVVSPHLKGSRFIDVGTGPGLPGIPLAILNPDKEFVLLDSLGKRIRFQKQVQFELGINNISSIESRVEAYQPEELFDGVLSRAFASIQDMLQWCHHLPKSDGCFYALKGQLSEDEMANMPQGFRVTDTIELVVPKLDEQRHLLRVVKQD.

S-adenosyl-L-methionine is bound by residues G74, L79, 125–126 (VE), and R140.

Belongs to the methyltransferase superfamily. RNA methyltransferase RsmG family.

It is found in the cytoplasm. The catalysed reaction is guanosine(527) in 16S rRNA + S-adenosyl-L-methionine = N(7)-methylguanosine(527) in 16S rRNA + S-adenosyl-L-homocysteine. Its function is as follows. Specifically methylates the N7 position of guanine in position 527 of 16S rRNA. In Shewanella piezotolerans (strain WP3 / JCM 13877), this protein is Ribosomal RNA small subunit methyltransferase G.